A 112-amino-acid polypeptide reads, in one-letter code: Putative pterin-4-alpha-carbinolamine dehydratase (112 aa).

The protein belongs to the pterin-4-alpha-carbinolamine dehydratase family.

It catalyses the reaction (4aS,6R)-4a-hydroxy-L-erythro-5,6,7,8-tetrahydrobiopterin = (6R)-L-erythro-6,7-dihydrobiopterin + H2O. The chain is Putative pterin-4-alpha-carbinolamine dehydratase from Photobacterium profundum (strain SS9).